Reading from the N-terminus, the 715-residue chain is Scinderin (715 aa).

Residues 1–363 (MAQGLYHEEF…DGFGKVYVTE (363 aa)) form an actin-severing region. The stretch at 27 to 77 (LELVPVPESAYGNFYVGDAYLVLHTTQASRGFTYRLHFWLGKECTQDESTA) is one Gelsolin-like 1 repeat. Y102 is modified (phosphotyrosine). A 1,2-diacyl-sn-glycero-3-phospho-(1D-myo-inositol-4,5-bisphosphate) is bound by residues 112–119 (KGGLKYKA) and 138–146 (RLLHVKGRR). 4 Gelsolin-like repeats span residues 148 to 188 (VRAT…YERL), 265 to 307 (LVAE…QERK), 398 to 451 (VQIW…DELT), and 523 to 564 (TRIM…EEEK). Residues 364–715 (KVAHVKQIPF…WFLGWDSSRW (352 aa)) form an actin-binding, Ca-sensitive region. The tract at residues 364–715 (KVAHVKQIPF…WFLGWDSSRW (352 aa)) is ca(2+)-dependent actin binding. The Ca(2+) site is built by N538, D539, and E562. Y599 is modified (phosphotyrosine). The Gelsolin-like 6 repeat unit spans residues 626-668 (FIIEEVPGEFTQDDLAEDDVMLLDAWEQIFIWIGKDANEVEKS). 3 residues coordinate Ca(2+): D643, D644, and E666.

Belongs to the villin/gelsolin family. Post-translationally, the N-terminus is blocked. In terms of tissue distribution, in the adrenal gland, expressed in the medulla but, in the cortex, found only in diffuse parts.

The protein localises to the cytoplasm. It is found in the cytoskeleton. Its subcellular location is the cell projection. It localises to the podosome. Functionally, ca(2+)-dependent actin filament-severing protein that has a regulatory function in exocytosis by affecting the organization of the microfilament network underneath the plasma membrane. In vitro, also has barbed end capping and nucleating activities in the presence of Ca(2+). Severing activity is inhibited by phosphatidylinositol 4,5-bis-phosphate (PIP2). Required for megakaryocyte differentiation, maturation, polyploidization and apoptosis with the release of platelet-like particles. Plays a role in osteoclastogenesis (OCG) and actin cytoskeletal organization in osteoclasts. Regulates chondrocyte proliferation and differentiation. Inhibits cell proliferation and tumorigenesis. Signaling is mediated by MAPK, p38 and JNK pathways. This chain is Scinderin, found in Bos taurus (Bovine).